Here is an 888-residue protein sequence, read N- to C-terminus: G-protein coupled receptor family C group 6 member A (888 aa).

The signal sequence occupies residues 1-15; the sequence is MALLMTCFVIVFAAS. Topologically, residues 16 to 568 are extracellular; that stretch reads QPCQTPDDLV…KEMEYLDSLA (553 aa). N-linked (GlcNAc...) asparagine glycosylation is found at Asn251, Asn322, Asn532, and Asn544. A helical transmembrane segment spans residues 569–589; that stretch reads ILLLALSLLGILFVLAIGIIF. The Cytoplasmic segment spans residues 590-604; that stretch reads TRNLNTPVVKSSGEL. Residues 605 to 625 form a helical membrane-spanning segment; sequence MVRYVILFCHFLNFAGTGFFI. Over 626–641 the chain is Extracellular; sequence REPQSFTCKTRQTLIC. The chain crosses the membrane as a helical span at residues 642 to 662; the sequence is MSFTLCISYILMKSLKILLAF. The Cytoplasmic portion of the chain corresponds to 663–676; sequence SSKLQNFLKCFYKP. The chain crosses the membrane as a helical span at residues 677–697; the sequence is IPIIFTCTGIVVVCTLLIFAA. Topologically, residues 698–718 are extracellular; the sequence is PAVGQNVSLPRVIIFECEEGS. Residues 719-739 traverse the membrane as a helical segment; it reads ILAFGSMLGYAAILAFMCFIC. Topologically, residues 740–754 are cytoplasmic; it reads AFKGRKFPENYNEAK. A helical transmembrane segment spans residues 755–775; sequence FITFGMLIYFIAWITFIPIYT. Residues 776 to 779 are Extracellular-facing; the sequence is FGKY. The chain crosses the membrane as a helical span at residues 780–800; that stretch reads MLVVEIIIILISNYGICCMFF. The Cytoplasmic portion of the chain corresponds to 801-888; it reads PKCYVILSKQ…ALPPKRISSI (88 aa).

Belongs to the G-protein coupled receptor 3 family. Homodimer; disulfide-linked.

Its subcellular location is the cell membrane. Receptor activated by multiple ligands, including osteocalcin (BGLAP), basic amino acids, and various cations. Activated by amino acids with a preference for basic amino acids such as L-Lys, L-Arg and L-ornithine but also by small and polar amino acids. The L-alpha amino acids respond is augmented by divalent cations Ca(2+) and Mg(2+). Seems to act through a G(q)/G(11) and G(i)-coupled pathway. Regulates testosterone production by acting as a ligand for uncarboxylated osteocalcin hormone: osteocalcin-binding at the surface of Leydig cells initiates a signaling response that promotes the expression of enzymes required for testosterone synthesis in a CREB-dependent manner. Mediates the non-genomic effects of androgens in multiple tissue. May coordinate nutritional and hormonal anabolic signals through the sensing of extracellular amino acids, osteocalcin, divalent ions and its responsiveness to anabolic steroids. The chain is G-protein coupled receptor family C group 6 member A (GPRC6A) from Bos taurus (Bovine).